The chain runs to 889 residues: Alanine--tRNA ligase (889 aa).

Zn(2+) contacts are provided by H569, H573, C671, and H675.

Belongs to the class-II aminoacyl-tRNA synthetase family. Requires Zn(2+) as cofactor.

The protein resides in the cytoplasm. The catalysed reaction is tRNA(Ala) + L-alanine + ATP = L-alanyl-tRNA(Ala) + AMP + diphosphate. Functionally, catalyzes the attachment of alanine to tRNA(Ala) in a two-step reaction: alanine is first activated by ATP to form Ala-AMP and then transferred to the acceptor end of tRNA(Ala). Also edits incorrectly charged Ser-tRNA(Ala) and Gly-tRNA(Ala) via its editing domain. The protein is Alanine--tRNA ligase of Synechococcus sp. (strain CC9605).